Consider the following 526-residue polypeptide: ATP synthase subunit alpha (526 aa).

171–178 (GDRQVGKT) provides a ligand contact to ATP.

The protein belongs to the ATPase alpha/beta chains family. F-type ATPases have 2 components, CF(1) - the catalytic core - and CF(0) - the membrane proton channel. CF(1) has five subunits: alpha(3), beta(3), gamma(1), delta(1), epsilon(1). CF(0) has three main subunits: a(1), b(2) and c(9-12). The alpha and beta chains form an alternating ring which encloses part of the gamma chain. CF(1) is attached to CF(0) by a central stalk formed by the gamma and epsilon chains, while a peripheral stalk is formed by the delta and b chains.

The protein resides in the cell inner membrane. The enzyme catalyses ATP + H2O + 4 H(+)(in) = ADP + phosphate + 5 H(+)(out). Functionally, produces ATP from ADP in the presence of a proton gradient across the membrane. The alpha chain is a regulatory subunit. This chain is ATP synthase subunit alpha, found in Azobacteroides pseudotrichonymphae genomovar. CFP2.